The following is a 435-amino-acid chain: Nucleoredoxin (435 aa).

Residue serine 2 is modified to N-acetylserine. The region spanning 167–321 (PKPFREVIAG…VLELSDSNAV (155 aa)) is the Thioredoxin domain.

Belongs to the nucleoredoxin family. In terms of assembly, associates with the phosphatase 2A holoenzyme. Interacts with PPP2CA; the interaction is direct. Interacts with DVL1 (via PDZ domain); the interaction is direct and regulated by oxidative stress.

It localises to the cytoplasm. The protein localises to the cytosol. It is found in the nucleus. It catalyses the reaction [protein]-dithiol + NAD(+) = [protein]-disulfide + NADH + H(+). It carries out the reaction [protein]-dithiol + NADP(+) = [protein]-disulfide + NADPH + H(+). Functionally, functions as a redox-dependent negative regulator of the Wnt signaling pathway, possibly by preventing ubiquitination of DVL3 by the BCR(KLHL12) complex. May also function as a transcriptional regulator act as a regulator of protein phosphatase 2A (PP2A). In Bos taurus (Bovine), this protein is Nucleoredoxin (NXN).